The chain runs to 769 residues: Post-GPI attachment to proteins factor 6 (769 aa).

An N-terminal signal peptide occupies residues 1–33; the sequence is MGRVGAGGTAREAATGSLLLLLLLLARPPPAAA. Residues 34–543 lie on the Extracellular side of the membrane; that stretch reads SNSKESEAGL…STAQTVAQQR (510 aa). 2 N-linked (GlcNAc...) asparagine glycosylation sites follow: asparagine 138 and asparagine 411. An EGF-like domain is found at 495 to 531; sequence PCLNDCGPYGQCLLLRRYGYVYAGCSCKAGWRGWSCT. 3 disulfides stabilise this stretch: cysteine 496/cysteine 506, cysteine 500/cysteine 519, and cysteine 521/cysteine 530. The helical transmembrane segment at 544 to 564 threads the bilayer; sequence AAALLLTLSNLMFLAPIAISL. Residues 565-567 are Cytoplasmic-facing; sequence HRS. A helical transmembrane segment spans residues 568–588; it reads FLVEASVYFYTMFFSTFYHAC. The Extracellular portion of the chain corresponds to 589–603; that stretch reads DQPGEAVLCILSYDT. A helical transmembrane segment spans residues 604–624; that stretch reads LQYCDFLGSGASTWVTILCMA. The Cytoplasmic segment spans residues 625 to 627; the sequence is RLK. The chain crosses the membrane as a helical span at residues 628-648; the sequence is TILKQVLLVLGTLVIAMSLQM. Topologically, residues 649 to 651 are extracellular; it reads DRR. The chain crosses the membrane as a helical span at residues 652–672; the sequence is GIWNLMGPCVFAFVIMASMWI. Residues 673 to 688 lie on the Cytoplasmic side of the membrane; sequence YRCGHRGQCYPTSWQR. A helical transmembrane segment spans residues 689–709; that stretch reads WVFYLLPGISMASVGIAMYTS. Residues 710–715 lie on the Extracellular side of the membrane; it reads MMTSDN. A helical membrane pass occupies residues 716–736; sequence YYYTHSIWHILLAGSAAFLLP. The Cytoplasmic segment spans residues 737-769; the sequence is PREEKAGSWACLQKFPCHYQICRNDRDELYTVT.

Belongs to the TMEM8 family. In terms of processing, glycosylated.

The protein localises to the cell membrane. It is found in the lysosome membrane. It catalyses the reaction a 1,2-diacyl-sn-glycero-3-phosphocholine + H2O = a 1-acyl-sn-glycero-3-phosphocholine + a fatty acid + H(+). In terms of biological role, involved in the lipid remodeling steps of GPI-anchor maturation. Lipid remodeling steps consist in the generation of 2 saturated fatty chains at the sn-2 position of GPI-anchor proteins (GPI-AP). Has phospholipase A2 activity that removes an acyl-chain at the sn-2 position of GPI-anchors during the remodeling of GPI. Required for the shedding of the GPI-AP CRIPTO, but not CFC1, at the cell surface. Shedding of CRIPTO modulates Nodal signaling by allowing soluble CRIPTO to act as a Nodal coreceptor on other cells. Also indirectly involved in the translocation of RAC1 from the cytosol to the plasma membrane by maintaining the steady state amount of CAV1-enriched plasma membrane subdomains, stabilizing RAC1 at the plasma membrane. The chain is Post-GPI attachment to proteins factor 6 from Mus musculus (Mouse).